Here is a 700-residue protein sequence, read N- to C-terminus: Elongation factor G 2 (700 aa).

The tr-type G domain occupies 8 to 290; sequence ERYRNIGISA…AVVDYLPSPI (283 aa). GTP is bound by residues 17 to 24, 88 to 92, and 142 to 145; these read AHIDAGKT, DTPGH, and NKMD.

It belongs to the TRAFAC class translation factor GTPase superfamily. Classic translation factor GTPase family. EF-G/EF-2 subfamily.

The protein resides in the cytoplasm. Catalyzes the GTP-dependent ribosomal translocation step during translation elongation. During this step, the ribosome changes from the pre-translocational (PRE) to the post-translocational (POST) state as the newly formed A-site-bound peptidyl-tRNA and P-site-bound deacylated tRNA move to the P and E sites, respectively. Catalyzes the coordinated movement of the two tRNA molecules, the mRNA and conformational changes in the ribosome. The protein is Elongation factor G 2 (fusB) of Ralstonia nicotianae (strain ATCC BAA-1114 / GMI1000) (Ralstonia solanacearum).